The chain runs to 292 residues: Formamidopyrimidine-DNA glycosylase (292 aa).

The active-site Schiff-base intermediate with DNA is the Pro2. Glu3 acts as the Proton donor in catalysis. The Proton donor; for beta-elimination activity role is filled by Lys61. DNA-binding residues include His96, Arg115, and Lys161. Residues 247-281 form an FPG-type zinc finger; the sequence is SAYGQEDRPCPRCGTAIRREKFMNRSSFSCPKCQP. Catalysis depends on Arg271, which acts as the Proton donor; for delta-elimination activity.

Belongs to the FPG family. As to quaternary structure, monomer. It depends on Zn(2+) as a cofactor.

It carries out the reaction Hydrolysis of DNA containing ring-opened 7-methylguanine residues, releasing 2,6-diamino-4-hydroxy-5-(N-methyl)formamidopyrimidine.. It catalyses the reaction 2'-deoxyribonucleotide-(2'-deoxyribose 5'-phosphate)-2'-deoxyribonucleotide-DNA = a 3'-end 2'-deoxyribonucleotide-(2,3-dehydro-2,3-deoxyribose 5'-phosphate)-DNA + a 5'-end 5'-phospho-2'-deoxyribonucleoside-DNA + H(+). Its function is as follows. Involved in base excision repair of DNA damaged by oxidation or by mutagenic agents. Acts as a DNA glycosylase that recognizes and removes damaged bases. Has a preference for oxidized purines, such as 7,8-dihydro-8-oxoguanine (8-oxoG). Has AP (apurinic/apyrimidinic) lyase activity and introduces nicks in the DNA strand. Cleaves the DNA backbone by beta-delta elimination to generate a single-strand break at the site of the removed base with both 3'- and 5'-phosphates. The protein is Formamidopyrimidine-DNA glycosylase of Rhodococcus jostii (strain RHA1).